The following is a 78-amino-acid chain: MVSYVKGPAYKALSHFGKLNAPLVRSYIPNLVFWGAAAGGAVATFTEGVPLFQKTFYEKIPFFGQHWIYNPDPEDVPV.

The Mitochondrial matrix segment spans residues 1 to 26 (MVSYVKGPAYKALSHFGKLNAPLVRS). A helical membrane pass occupies residues 27–46 (YIPNLVFWGAAAGGAVATFT). Over 47-78 (EGVPLFQKTFYEKIPFFGQHWIYNPDPEDVPV) the chain is Mitochondrial intermembrane.

It belongs to the UQCR11/QCR10 family. As to quaternary structure, component of the ubiquinol-cytochrome c oxidoreductase (cytochrome b-c1 complex, complex III, CIII), a multisubunit enzyme composed of 10 subunits. The complex is composed of 3 respiratory subunits cytochrome b (COB), cytochrome c1 (CYT1) and Rieske protein (RIP1), 2 core protein subunits COR1 and QCR2, and 5 low-molecular weight protein subunits QCR6, QCR7, QCR8, QCR9 and QCR10. The complex exists as an obligatory dimer and forms supercomplexes (SCs) in the inner mitochondrial membrane with a monomer or a dimer of cytochrome c oxidase (complex IV, CIV), resulting in 2 different assemblies (supercomplexes III(2)IV and III(2)IV(2)).

It is found in the mitochondrion inner membrane. In terms of biological role, component of the ubiquinol-cytochrome c oxidoreductase, a multisubunit transmembrane complex that is part of the mitochondrial electron transport chain which drives oxidative phosphorylation. The complex plays an important role in the uptake of multiple carbon sources present in different host niches. This is Cytochrome b-c1 complex subunit 10, mitochondrial from Candida albicans (strain SC5314 / ATCC MYA-2876) (Yeast).